The sequence spans 1240 residues: Neurofascin (1240 aa).

A signal peptide spans Met-1–Ala-24. At Ile-25 to Trp-1110 the chain is on the extracellular side. 6 Ig-like C2-type domains span residues Pro-41–Ser-137, Pro-143–Thr-230, Pro-244–Arg-332, Pro-337–Ser-424, Pro-430–Glu-517, and Pro-521–Ala-603. Cystine bridges form between Cys-63–Cys-118, Cys-162–Cys-213, Cys-268–Cys-316, and Cys-358–Cys-408. Asn-305 carries N-linked (GlcNAc...) asparagine glycosylation. Asn-409 and Asn-446 each carry an N-linked (GlcNAc...) asparagine glycan. 2 disulfide bridges follow: Cys-452–Cys-501 and Cys-543–Cys-592. Residue Tyr-481 is modified to Phosphotyrosine. Residue Asn-483 is glycosylated (N-linked (GlcNAc...) asparagine). At Ser-485 the chain carries Phosphoserine. 4 consecutive Fibronectin type-III domains span residues Arg-630–Ala-725, Pro-727–Asp-823, Ala-827–Ala-923, and Ala-1007–Thr-1099. A disordered region spans residues Ser-710–Arg-740. 4 N-linked (GlcNAc...) asparagine glycosylation sites follow: Asn-752, Asn-778, Asn-866, and Asn-881. Residues Ala-902–Leu-942 form a disordered region. Positions Gly-907–Ser-916 are enriched in low complexity. A compositionally biased stretch (pro residues) spans Pro-917–Pro-933. The chain crosses the membrane as a helical span at residues Phe-1111 to Ile-1131. At Lys-1132 to Ala-1240 the chain is on the cytoplasmic side. Residues Val-1141–Ala-1240 are disordered. A compositionally biased stretch (acidic residues) spans Pro-1154–Asp-1165. Residues Ser-1160, Ser-1174, Ser-1187, Ser-1190, Ser-1226, Ser-1227, and Ser-1231 each carry the phosphoserine modification. Residues Leu-1171–Gln-1184 are compositionally biased toward polar residues.

It belongs to the immunoglobulin superfamily. L1/neurofascin/NgCAM family. As to quaternary structure, horseshoe-shaped homodimer. Probable constituent of a NFASC/NRCAM/ankyrin-G complex. Associates with the sodium channel beta-1 (SCN1B) and beta-3 (SCN3B) subunits. Interacts with GLDN/gliomedin. Interacts with MYOC.

The protein resides in the cell membrane. In terms of biological role, cell adhesion, ankyrin-binding protein which may be involved in neurite extension, axonal guidance, synaptogenesis, myelination and neuron-glial cell interactions. This Mus musculus (Mouse) protein is Neurofascin (Nfasc).